A 668-amino-acid polypeptide reads, in one-letter code: tRNA 5-methylaminomethyl-2-thiouridine biosynthesis bifunctional protein MnmC (668 aa).

The tRNA (mnm(5)s(2)U34)-methyltransferase stretch occupies residues M1–E245. An FAD-dependent cmnm(5)s(2)U34 oxidoreductase region spans residues I270–G668.

It in the N-terminal section; belongs to the methyltransferase superfamily. tRNA (mnm(5)s(2)U34)-methyltransferase family. The protein in the C-terminal section; belongs to the DAO family. FAD is required as a cofactor.

It localises to the cytoplasm. The enzyme catalyses 5-aminomethyl-2-thiouridine(34) in tRNA + S-adenosyl-L-methionine = 5-methylaminomethyl-2-thiouridine(34) in tRNA + S-adenosyl-L-homocysteine + H(+). In terms of biological role, catalyzes the last two steps in the biosynthesis of 5-methylaminomethyl-2-thiouridine (mnm(5)s(2)U) at the wobble position (U34) in tRNA. Catalyzes the FAD-dependent demodification of cmnm(5)s(2)U34 to nm(5)s(2)U34, followed by the transfer of a methyl group from S-adenosyl-L-methionine to nm(5)s(2)U34, to form mnm(5)s(2)U34. This is tRNA 5-methylaminomethyl-2-thiouridine biosynthesis bifunctional protein MnmC from Escherichia coli O6:H1 (strain CFT073 / ATCC 700928 / UPEC).